Here is an 841-residue protein sequence, read N- to C-terminus: mRNA export factor ICP27 homolog (841 aa).

Disordered stretches follow at residues Pro-12–Lys-82 and Arg-115–Asp-163. The segment covering Tyr-32–Tyr-49 has biased composition (low complexity). Residues Met-66–Gln-79 show a composition bias toward pro residues. Positions Ser-132–Ser-147 are enriched in low complexity. Zn(2+) contacts are provided by Cys-298, His-411, Cys-413, and Cys-418. The CHC2-type zinc-finger motif lies at Cys-298–Cys-418. Disordered regions lie at residues His-444 to His-749 and Ser-774 to Pro-811. Residues Val-495 to Asp-507 are compositionally biased toward basic and acidic residues. Positions Asn-514–Arg-526 are enriched in basic residues. A compositionally biased stretch (basic and acidic residues) spans Arg-553–Gly-563. Composition is skewed to low complexity over residues Lys-568–His-579 and Ser-591–Thr-603. Positions Met-614–Pro-623 are enriched in pro residues. The span at Arg-641 to Leu-657 shows a compositional bias: basic and acidic residues. Residues Asp-688 to Ser-699 show a composition bias toward low complexity. Residues Glu-708–Asp-731 show a composition bias toward basic and acidic residues. Acidic residues-rich tracts occupy residues Phe-732 to His-749 and Asp-793 to Asp-809.

Belongs to the HHV-1 ICP27 protein family.

It localises to the virion tegument. It is found in the virion. The protein localises to the host nucleus. The protein resides in the host cytoplasm. Functionally, immediate early (EI) protein that plays many roles during productive infection including regulation of viral gene expression and nuclear export of intronless viral RNAs. In Mus musculus (Mouse), this protein is mRNA export factor ICP27 homolog.